The following is a 333-amino-acid chain: Phosphate acyltransferase (333 aa).

It belongs to the PlsX family. In terms of assembly, homodimer. Probably interacts with PlsY.

Its subcellular location is the cytoplasm. The catalysed reaction is a fatty acyl-[ACP] + phosphate = an acyl phosphate + holo-[ACP]. The protein operates within lipid metabolism; phospholipid metabolism. Catalyzes the reversible formation of acyl-phosphate (acyl-PO(4)) from acyl-[acyl-carrier-protein] (acyl-ACP). This enzyme utilizes acyl-ACP as fatty acyl donor, but not acyl-CoA. This chain is Phosphate acyltransferase, found in Lactobacillus johnsonii (strain CNCM I-12250 / La1 / NCC 533).